Here is a 64-residue protein sequence, read N- to C-terminus: Large ribosomal subunit protein bL35 (64 aa).

A compositionally biased stretch (basic residues) spans 1–15; sequence MPKNKTHSGASKRFR. Residues 1-20 are disordered; that stretch reads MPKNKTHSGASKRFRVTGSG.

It belongs to the bacterial ribosomal protein bL35 family.

In Nocardioides sp. (strain ATCC BAA-499 / JS614), this protein is Large ribosomal subunit protein bL35.